The chain runs to 82 residues: uncharacterized protein (82 aa).

3 helical membrane-spanning segments follow: residues 4-26 (IAVLFIVFGFPIVAGVFGIAGHF), 31-50 (FWVAPLIVLITSLILLVTLA), and 55-77 (SFIFWVVMYTAIALVTSVATLFL).

The protein localises to the cell membrane. This is an uncharacterized protein from Bacillus subtilis (strain 168).